The sequence spans 25 residues: Antimicrobial peptide THP3 (25 aa).

It is found in the secreted. Functionally, bactericidal activity; inhibits Staphylococcus aureus. The chain is Antimicrobial peptide THP3 from Meleagris gallopavo (Wild turkey).